The primary structure comprises 412 residues: NADH-quinone oxidoreductase subunit 4 (412 aa).

This sequence belongs to the complex I 49 kDa subunit family. In terms of assembly, NDH-1 is composed of at least 14 different subunits, Nqo1 to Nqo14. The complex has a L-shaped structure, with the hydrophobic arm (subunits Nqo7, Nqo8, Nqo10 to Nqo14) embedded in the inner membrane and the hydrophilic peripheral arm (subunits Nqo1 to Nqo6, Nqo9) protruding into the bacterial cytoplasm. The hydrophilic domain contains all the redox centers.

Its subcellular location is the cell inner membrane. The catalysed reaction is a quinone + NADH + 5 H(+)(in) = a quinol + NAD(+) + 4 H(+)(out). In terms of biological role, NDH-1 shuttles electrons from NADH, via FMN and iron-sulfur (Fe-S) centers, to quinones in the respiratory chain. The immediate electron acceptor for the enzyme in this species is believed to be ubiquinone. Couples the redox reaction to proton translocation (for every two electrons transferred, four hydrogen ions are translocated across the cytoplasmic membrane), and thus conserves the redox energy in a proton gradient. The protein is NADH-quinone oxidoreductase subunit 4 (nqo4) of Paracoccus denitrificans.